The chain runs to 202 residues: Alcohol dehydrogenase-related 31 kDa protein (202 aa).

Residue 11 to 34 (YVADCGGIALETSKVLMTKNIAKL) coordinates NAD(+). S139 contributes to the substrate binding site. The active-site Proton acceptor is the Y152.

The protein belongs to the short-chain dehydrogenases/reductases (SDR) family.

This chain is Alcohol dehydrogenase-related 31 kDa protein (Adhr), found in Drosophila erecta (Fruit fly).